The primary structure comprises 94 residues: Integration host factor subunit beta (94 aa).

The protein belongs to the bacterial histone-like protein family. Heterodimer of an alpha and a beta chain.

Functionally, this protein is one of the two subunits of integration host factor, a specific DNA-binding protein that functions in genetic recombination as well as in transcriptional and translational control. This is Integration host factor subunit beta from Sodalis glossinidius (strain morsitans).